Consider the following 251-residue polypeptide: 2,3-bisphosphoglycerate-dependent phosphoglycerate mutase (251 aa).

Substrate is bound by residues R13–N20, T26–G27, R65, E92–Y95, K103, R119–R120, and G186–N187. H14 functions as the Tele-phosphohistidine intermediate in the catalytic mechanism. Catalysis depends on E92, which acts as the Proton donor/acceptor.

It belongs to the phosphoglycerate mutase family. BPG-dependent PGAM subfamily.

The catalysed reaction is (2R)-2-phosphoglycerate = (2R)-3-phosphoglycerate. The protein operates within carbohydrate degradation; glycolysis; pyruvate from D-glyceraldehyde 3-phosphate: step 3/5. Its function is as follows. Catalyzes the interconversion of 2-phosphoglycerate and 3-phosphoglycerate. The sequence is that of 2,3-bisphosphoglycerate-dependent phosphoglycerate mutase from Rhodococcus jostii (strain RHA1).